A 627-amino-acid chain; its full sequence is ATP-dependent zinc metalloprotease FtsH 2 (627 aa).

Residues 1–7 (MKFSWRT) lie on the Cytoplasmic side of the membrane. Residues 8–28 (ALLWSLPLLVVGFFFWQGSFG) traverse the membrane as a helical segment. Residues 29–117 (GADANLGSNT…SHPVRNNGMV (89 aa)) lie on the Lumenal side of the membrane. Residues 118 to 138 (WGFVGNLIFPVLLIASLFFLF) form a helical membrane-spanning segment. At 139 to 627 (RRSSNMPGGP…PVKEQLIPQL (489 aa)) the chain is on the cytoplasmic side. 212–219 (GPPGTGKT) serves as a coordination point for ATP. Residue His-433 coordinates Zn(2+). Residue Glu-434 is part of the active site. His-437 and Asp-511 together coordinate Zn(2+).

This sequence in the central section; belongs to the AAA ATPase family. It in the C-terminal section; belongs to the peptidase M41 family. As to quaternary structure, homohexamer (Potential). Part of a large (&gt;500 kDa) complex that includes FtsH3 and PSII. Coimmunoprecipitates with YidC. Zn(2+) is required as a cofactor.

The protein resides in the cellular thylakoid membrane. Acts as a processive, ATP-dependent zinc metallopeptidase for both cytoplasmic and membrane proteins. Plays a role in the quality control of integral membrane proteins. Its function is as follows. Plays a role in the selective replacement of photosystem II (PSII) protein D1 in the PSII repair cycle following visible-light and UV-B induced damage. If damaged D1 is not removed then new D1 cannot be inserted to restore the PSII reaction center. Seems to also degrade damaged and/or unassembled PSII proteins D2 and PsbB (CP47). May recognize D1 via its first 20 amino acids, as deletion of these prevents the PSII repair cycle. Also seems to degrade cytoplasmic GGPS, glucosylglycerol-phosphate synthase. The chain is ATP-dependent zinc metalloprotease FtsH 2 (ftsH2) from Synechocystis sp. (strain ATCC 27184 / PCC 6803 / Kazusa).